A 394-amino-acid chain; its full sequence is Guanine nucleotide-binding protein G(s) subunit alpha (394 aa).

The disordered stretch occupies residues 1-25; sequence MGCLGDSKTEDQRNEEKAQREANKK. A lipid anchor (N-palmitoyl glycine) is attached at G2. The S-palmitoyl cysteine moiety is linked to residue C3. Residues 7–25 show a composition bias toward basic and acidic residues; that stretch reads SKTEDQRNEEKAQREANKK. A G-alpha domain is found at 39 to 394; it reads ATHRLLLLGA…RMHLRQYELL (356 aa). The interval 42–55 is G1 motif; the sequence is RLLLLGAGESGKST. Residue 47–55 participates in GTP binding; sequence GAGESGKST. S54 contacts Mg(2+). Residues 68–90 form a disordered region; sequence FNGEGGEEDPQAARSNSDGEKAT. A G2 motif region spans residues 196-204; it reads DLLRCRVLT. GTP-binding positions include 197–204, 223–227, 292–295, and A366; these read LLRCRVLT, DVGGQ, and NKQD. Mg(2+) is bound at residue T204. Residues 219 to 228 form a G3 motif region; that stretch reads FHMFDVGGQR. The G4 motif stretch occupies residues 288–295; sequence ILFLNKQD. The segment at 364–369 is G5 motif; the sequence is TCAVDT.

It belongs to the G-alpha family. G(s) subfamily. Heterotrimeric G proteins are composed of 3 units; alpha, beta and gamma. The alpha chain contains the guanine nucleotide binding site. Interacts with CRY1; the interaction may block GPCR-mediated regulation of cAMP concentrations. Interacts with ADCY6 and stimulates its adenylyl cyclase activity. Interacts with ADCY2 and ADCY5. Stimulates the ADCY5 adenylyl cyclase activity. Interaction with SASH1.

It localises to the cell membrane. Guanine nucleotide-binding proteins (G proteins) function as transducers in numerous signaling pathways controlled by G protein-coupled receptors (GPCRs). Signaling involves the activation of adenylyl cyclases, resulting in increased levels of the signaling molecule cAMP. GNAS functions downstream of several GPCRs, including beta-adrenergic receptors. Stimulates the Ras signaling pathway via RAPGEF2. The sequence is that of Guanine nucleotide-binding protein G(s) subunit alpha (GNAS) from Cricetulus longicaudatus (Long-tailed dwarf hamster).